The sequence spans 61 residues: Photosystem II reaction center protein K (61 aa).

The propeptide occupies 1–24; that stretch reads MLNIFSLMYICLNSALYSSSFLFA. Residues 40 to 60 form a helical membrane-spanning segment; sequence MPVIPVLFFLLAFVWQAAVSF.

Belongs to the PsbK family. In terms of assembly, PSII is composed of 1 copy each of membrane proteins PsbA, PsbB, PsbC, PsbD, PsbE, PsbF, PsbH, PsbI, PsbJ, PsbK, PsbL, PsbM, PsbT, PsbX, PsbY, PsbZ, Psb30/Ycf12, at least 3 peripheral proteins of the oxygen-evolving complex and a large number of cofactors. It forms dimeric complexes.

The protein localises to the plastid. The protein resides in the chloroplast thylakoid membrane. Its function is as follows. One of the components of the core complex of photosystem II (PSII). PSII is a light-driven water:plastoquinone oxidoreductase that uses light energy to abstract electrons from H(2)O, generating O(2) and a proton gradient subsequently used for ATP formation. It consists of a core antenna complex that captures photons, and an electron transfer chain that converts photonic excitation into a charge separation. The sequence is that of Photosystem II reaction center protein K from Citrus sinensis (Sweet orange).